A 371-amino-acid chain; its full sequence is Chorismate synthase (371 aa).

Residues Arg-48 and Arg-54 each coordinate NADP(+). FMN contacts are provided by residues 125–127, 238–239, Gly-278, 293–297, and Arg-319; these read RSS, NA, and KPTSS.

The protein belongs to the chorismate synthase family. In terms of assembly, homotetramer. The cofactor is FMNH2.

It carries out the reaction 5-O-(1-carboxyvinyl)-3-phosphoshikimate = chorismate + phosphate. Its pathway is metabolic intermediate biosynthesis; chorismate biosynthesis; chorismate from D-erythrose 4-phosphate and phosphoenolpyruvate: step 7/7. Catalyzes the anti-1,4-elimination of the C-3 phosphate and the C-6 proR hydrogen from 5-enolpyruvylshikimate-3-phosphate (EPSP) to yield chorismate, which is the branch point compound that serves as the starting substrate for the three terminal pathways of aromatic amino acid biosynthesis. This reaction introduces a second double bond into the aromatic ring system. The chain is Chorismate synthase from Polynucleobacter asymbioticus (strain DSM 18221 / CIP 109841 / QLW-P1DMWA-1) (Polynucleobacter necessarius subsp. asymbioticus).